The sequence spans 361 residues: Phenylalanine--tRNA ligase alpha subunit (361 aa).

Glutamate 260 is a binding site for Mg(2+).

The protein belongs to the class-II aminoacyl-tRNA synthetase family. Phe-tRNA synthetase alpha subunit type 1 subfamily. In terms of assembly, tetramer of two alpha and two beta subunits. Mg(2+) is required as a cofactor.

The protein resides in the cytoplasm. It catalyses the reaction tRNA(Phe) + L-phenylalanine + ATP = L-phenylalanyl-tRNA(Phe) + AMP + diphosphate + H(+). This Bartonella bacilliformis (strain ATCC 35685 / KC583 / Herrer 020/F12,63) protein is Phenylalanine--tRNA ligase alpha subunit.